The sequence spans 552 residues: uncharacterized protein (552 aa).

This is an uncharacterized protein from Bacillus subtilis (strain 168).